Consider the following 283-residue polypeptide: Rhomboid-like protease 2 (283 aa).

Residues 1-11 (MANIRTLSDYA) are compositionally biased toward polar residues. Positions 1–26 (MANIRTLSDYASSPPRGSSALEGEVG) are disordered. 3 helical membrane passes run 62–82 (IIIISFVQIAVYIASLAAGLA), 114–134 (ICPLFLHLNLFHILMNLWVQI), and 149–169 (LLAVYFGVGVLANMISAAVLF). The active-site Nucleophile is the Ser-178. 4 helical membrane passes run 179–199 (TAVFALIGVQLAELALIWHAI), 205–225 (AIISVCICLFFVFVSSFGSHM), 227–247 (SVGHIGGLVMGFAAGIWLNEN), and 260–280 (LTSQVALAAAPILSCIFIFLV). The active site involves His-230.

It belongs to the peptidase S54 family.

The protein localises to the membrane. It catalyses the reaction Cleaves type-1 transmembrane domains using a catalytic dyad composed of serine and histidine that are contributed by different transmembrane domains.. In terms of biological role, serine protease involved in intramembrane proteolysis and the subsequent release of polypeptides from their membrane anchors. This chain is Rhomboid-like protease 2 (ROM2), found in Toxoplasma gondii.